The sequence spans 553 residues: Glutamyl-tRNA(Gln) amidotransferase subunit B, mitochondrial (553 aa).

The transit peptide at 1 to 18 directs the protein to the mitochondrion; that stretch reads MAASTSGYSGVLFRLRKY.

This sequence belongs to the GatB/GatE family. GatB subfamily. As to quaternary structure, subunit of the heterotrimeric GatCAB amidotransferase (AdT) complex, composed of A (qrsl1), B (gatb) and C (gatc) subunits.

Its subcellular location is the mitochondrion. It carries out the reaction L-glutamyl-tRNA(Gln) + L-glutamine + ATP + H2O = L-glutaminyl-tRNA(Gln) + L-glutamate + ADP + phosphate + H(+). Functionally, allows the formation of correctly charged Gln-tRNA(Gln) through the transamidation of misacylated Glu-tRNA(Gln) in the mitochondria. The reaction takes place in the presence of glutamine and ATP through an activated gamma-phospho-Glu-tRNA(Gln). The chain is Glutamyl-tRNA(Gln) amidotransferase subunit B, mitochondrial from Danio rerio (Zebrafish).